The following is a 243-amino-acid chain: 6-carboxyhexanoate--CoA ligase (243 aa).

Belongs to the BioW family. In terms of assembly, homodimer. It depends on Mg(2+) as a cofactor.

The catalysed reaction is heptanedioate + ATP + CoA = 6-carboxyhexanoyl-CoA + AMP + diphosphate. Its pathway is metabolic intermediate metabolism; pimeloyl-CoA biosynthesis; pimeloyl-CoA from pimelate: step 1/1. Catalyzes the transformation of pimelate into pimeloyl-CoA with concomitant hydrolysis of ATP to AMP. The protein is 6-carboxyhexanoate--CoA ligase of Corynebacterium pseudotuberculosis (strain FRC41).